The primary structure comprises 878 residues: Phosphoenolpyruvate carboxylase (878 aa).

Residues His-137 and Lys-545 contribute to the active site.

Belongs to the PEPCase type 1 family. It depends on Mg(2+) as a cofactor.

The catalysed reaction is oxaloacetate + phosphate = phosphoenolpyruvate + hydrogencarbonate. Forms oxaloacetate, a four-carbon dicarboxylic acid source for the tricarboxylic acid cycle. The protein is Phosphoenolpyruvate carboxylase of Proteus mirabilis (strain HI4320).